Consider the following 493-residue polypeptide: MTDVRVRFCPSPTGTPHVGLVRTALFNWAYARHTGGKLIFRIEDTDAARDSEESYAALLDAMNWLGLNWDEGVEVGGPHEPYRQSQRSDIYQDVLKKLIDAGEVYPAYSTAEEVEERHRAAGRDPKLGYDNYDRTLTEDEITAFEAEGRKPVWRLRMPEQDWKWNDLVRGEVEFKSFTQPDFVVARSNGQPLYTLVNPVDDALMEITHVLRGEDLLPSTPRQIALYEALKRIGVAKQTPVFGHLPFVMGEGNKKLSKRDPQSDLFQHRTNGIIPEGMLNYLGLLGWSLSADQDIFTVEEFVANFDIADVLGNPARFDQKKLEAINADHIRLLPAGEFEERLRAHLSEFTDFPEDYPAEKFSFAAELVQTRIKTLAEGYDLLKFLVTADEDLVLDEKAAKKNLKEAAIEPLDAGINALEAVAEWTTPNIEAALTRALIEELGLKPRVAYGALRVAISGAAVSPPLFESMELLGRESTLTRLRAARAATPYQAAE.

Positions 10 to 20 (PSPTGTPHVGL) match the 'HIGH' region motif. Residues 254-258 (KLSKR) carry the 'KMSKS' region motif. Lys-257 is a binding site for ATP.

The protein belongs to the class-I aminoacyl-tRNA synthetase family. Glutamate--tRNA ligase type 1 subfamily. In terms of assembly, monomer.

It is found in the cytoplasm. The enzyme catalyses tRNA(Glu) + L-glutamate + ATP = L-glutamyl-tRNA(Glu) + AMP + diphosphate. Its function is as follows. Catalyzes the attachment of glutamate to tRNA(Glu) in a two-step reaction: glutamate is first activated by ATP to form Glu-AMP and then transferred to the acceptor end of tRNA(Glu). This chain is Glutamate--tRNA ligase, found in Corynebacterium efficiens (strain DSM 44549 / YS-314 / AJ 12310 / JCM 11189 / NBRC 100395).